The chain runs to 161 residues: 2-C-methyl-D-erythritol 2,4-cyclodiphosphate synthase (161 aa).

A divalent metal cation is bound by residues aspartate 10 and histidine 12. 4-CDP-2-C-methyl-D-erythritol 2-phosphate-binding positions include 10–12 and 36–37; these read DVH and HS. Histidine 44 lines the a divalent metal cation pocket. 4-CDP-2-C-methyl-D-erythritol 2-phosphate-binding positions include 58-60, 63-67, and arginine 144; these read DIG and FSDTD.

It belongs to the IspF family. As to quaternary structure, homotrimer. Requires a divalent metal cation as cofactor.

The enzyme catalyses 4-CDP-2-C-methyl-D-erythritol 2-phosphate = 2-C-methyl-D-erythritol 2,4-cyclic diphosphate + CMP. Its pathway is isoprenoid biosynthesis; isopentenyl diphosphate biosynthesis via DXP pathway; isopentenyl diphosphate from 1-deoxy-D-xylulose 5-phosphate: step 4/6. Involved in the biosynthesis of isopentenyl diphosphate (IPP) and dimethylallyl diphosphate (DMAPP), two major building blocks of isoprenoid compounds. Catalyzes the conversion of 4-diphosphocytidyl-2-C-methyl-D-erythritol 2-phosphate (CDP-ME2P) to 2-C-methyl-D-erythritol 2,4-cyclodiphosphate (ME-CPP) with a corresponding release of cytidine 5-monophosphate (CMP). The polypeptide is 2-C-methyl-D-erythritol 2,4-cyclodiphosphate synthase (Burkholderia ambifaria (strain ATCC BAA-244 / DSM 16087 / CCUG 44356 / LMG 19182 / AMMD) (Burkholderia cepacia (strain AMMD))).